The primary structure comprises 862 residues: Protein translocase subunit SecA (862 aa).

ATP-binding positions include glutamine 88, 106–110, and aspartate 506; that span reads GEGKT. Zn(2+) is bound by residues cysteine 839, cysteine 841, cysteine 850, and histidine 851.

This sequence belongs to the SecA family. Monomer and homodimer. Part of the essential Sec protein translocation apparatus which comprises SecA, SecYEG and auxiliary proteins SecDF-YajC and YidC. Requires Zn(2+) as cofactor.

It is found in the cell inner membrane. The protein resides in the cytoplasm. It carries out the reaction ATP + H2O + cellular proteinSide 1 = ADP + phosphate + cellular proteinSide 2.. Its function is as follows. Part of the Sec protein translocase complex. Interacts with the SecYEG preprotein conducting channel. Has a central role in coupling the hydrolysis of ATP to the transfer of proteins into and across the cell membrane, serving as an ATP-driven molecular motor driving the stepwise translocation of polypeptide chains across the membrane. The sequence is that of Protein translocase subunit SecA from Campylobacter jejuni subsp. doylei (strain ATCC BAA-1458 / RM4099 / 269.97).